Here is a 118-residue protein sequence, read N- to C-terminus: MEFAPIFVYLVISLLLSLILIGVSFLFASSSSLAYPEKLSAYECGFDPFDDARSRFDIRFYLVSILFIIFDLEVTFLFPWAVSLNKIGLFGFWSMMVFLFILTIGFVYEWKKGALDWE.

Transmembrane regions (helical) follow at residues 6-26, 62-82, and 87-107; these read IFVY…VSFL, LVSI…PWAV, and IGLF…IGFV.

It belongs to the complex I subunit 3 family.

It is found in the mitochondrion membrane. The enzyme catalyses a ubiquinone + NADH + 5 H(+)(in) = a ubiquinol + NAD(+) + 4 H(+)(out). Functionally, core subunit of the mitochondrial membrane respiratory chain NADH dehydrogenase (Complex I) that is believed to belong to the minimal assembly required for catalysis. Complex I functions in the transfer of electrons from NADH to the respiratory chain. The immediate electron acceptor for the enzyme is believed to be ubiquinone. This Marchantia polymorpha (Common liverwort) protein is NADH-ubiquinone oxidoreductase chain 3 (ND3).